The primary structure comprises 269 residues: MKIALGIEYNGQNYYGWQRQEKVRSVQEELEKALSHIANEKIEIFCAGRTDSGVSGTGQVVHFETNAVRPEKAWAFGTNAHLPDDIAVSWAKQVDDEFHARFSATARRYRYILYCNKLRSAILAGGITHCHLDLDAEKMHQAGQCLLGEQDFSSFRAAQCQSHTPWRNVHHLNVSRIGKYIIVDIQANAFVHHMVRNIVGSLIEVGTGNQPIEWMQWLLEQKNRQLAAPTAKPDGLYLVDVIYPQKFDIPKRPIGPLFLEDGLLNRPLK.

Aspartate 51 serves as the catalytic Nucleophile. Tyrosine 109 is a substrate binding site.

Belongs to the tRNA pseudouridine synthase TruA family. As to quaternary structure, homodimer.

The catalysed reaction is uridine(38/39/40) in tRNA = pseudouridine(38/39/40) in tRNA. Its function is as follows. Formation of pseudouridine at positions 38, 39 and 40 in the anticodon stem and loop of transfer RNAs. In Haemophilus influenzae (strain ATCC 51907 / DSM 11121 / KW20 / Rd), this protein is tRNA pseudouridine synthase A.